Reading from the N-terminus, the 855-residue chain is DNA mismatch repair protein MutS (855 aa).

613-620 (GPNMGGKS) is an ATP binding site. Residues 796–817 (TTSLPHEQPRAKPGKPAIPQQS) form a disordered region.

The protein belongs to the DNA mismatch repair MutS family.

Its function is as follows. This protein is involved in the repair of mismatches in DNA. It is possible that it carries out the mismatch recognition step. This protein has a weak ATPase activity. The sequence is that of DNA mismatch repair protein MutS from Pseudomonas syringae pv. tomato (strain ATCC BAA-871 / DC3000).